We begin with the raw amino-acid sequence, 247 residues long: Probable transcriptional regulatory protein ABO_0750 (247 aa).

This sequence belongs to the TACO1 family.

Its subcellular location is the cytoplasm. The polypeptide is Probable transcriptional regulatory protein ABO_0750 (Alcanivorax borkumensis (strain ATCC 700651 / DSM 11573 / NCIMB 13689 / SK2)).